Reading from the N-terminus, the 806-residue chain is Integrin beta-7 (806 aa).

An N-terminal signal peptide occupies residues 1–19 (MVDSSTVLIFLLVLGGGQS). Topologically, residues 20-724 (ELDTKITSSG…PQEKGVDHTR (705 aa)) are extracellular. Residues 44–92 (SCQPVPSCQKCILSHPSCAWCKQLNFTASGEAEARRCARREELLARGCP) form the PSI domain. Disulfide bonds link Cys-51–Cys-476, Cys-54–Cys-80, Cys-64–Cys-91, Cys-216–Cys-223, Cys-271–Cys-311, Cys-412–Cys-428, Cys-448–Cys-474, Cys-478–Cys-497, Cys-488–Cys-500, Cys-502–Cys-511, Cys-513–Cys-545, Cys-527–Cys-543, Cys-537–Cys-548, Cys-550–Cys-559, Cys-561–Cys-582, Cys-566–Cys-580, Cys-574–Cys-585, Cys-587–Cys-596, Cys-598–Cys-621, Cys-605–Cys-619, Cys-613–Cys-624, Cys-626–Cys-635, Cys-638–Cys-641, Cys-645–Cys-688, Cys-651–Cys-670, and Cys-654–Cys-666. An N-linked (GlcNAc...) asparagine glycan is attached at Asn-68. Residues 98-107 (EPRGRQEVLQ) are compositionally biased toward basic and acidic residues. Residues 98 to 123 (EPRGRQEVLQDKPLSQGDRGEGATQL) form a disordered region. Residues 150–389 (YPVDLYYLMD…QLIMDAYDSL (240 aa)) enclose the VWFA domain. The Mg(2+) site is built by Ser-161 and Ser-163. Ca(2+) contacts are provided by Ser-163, Asp-166, Asp-167, and Asp-198. N-linked (GlcNAc...) asparagine glycosylation is present at Asn-250. 4 residues coordinate Ca(2+): Asn-254, Asp-256, Pro-258, and Glu-259. Glu-259 provides a ligand contact to Mg(2+). Asn-279 is a glycosylation site (N-linked (GlcNAc...) asparagine). Residues Asp-289 and Glu-373 each contribute to the Ca(2+) site. Asn-434 carries an N-linked (GlcNAc...) asparagine glycan. I-EGF domains are found at residues 478 to 512 (CGDAQPHAPYCSDGQGDLQCGICSCAPGRLGQLCE), 513 to 560 (CSEA…RLCE), 561 to 597 (CDDASCERHEGILCGGFGHCQCGVCHCHANHTGRACE), and 598 to 636 (CSKSVDSCVSPEGGLCSGHGYCKCNRCQCLDGYYGALCD). An N-linked (GlcNAc...) asparagine glycan is attached at Asn-531. Asn-590 carries N-linked (GlcNAc...) asparagine glycosylation. N-linked (GlcNAc...) asparagine glycosylation is found at Asn-665 and Asn-674. Residues 725-745 (AIILGCTGGIVAVGLGLVLAY) traverse the membrane as a helical segment. Over 746-806 (RLSVEIYDRR…PSLSLTREAD (61 aa)) the chain is Cytoplasmic. The interval 786–806 (NPRFQGTNGRSPSLSLTREAD) is disordered.

This sequence belongs to the integrin beta chain family. In terms of assembly, heterodimer of an alpha and a beta subunit. ITGB7/beta-7 associates with either ITGA4/alpha-4 or ITGAE/alpha-E. Integrin ITGA4/ITGB7 interacts with MADCAM1. Integrin ITGA4/ITGB7 interacts with VCAM1 and fibronectin. Interacts with FLNA (via filamin repeats 4, 9, 12, 17, 19, 21, and 23).

The protein resides in the cell membrane. Functionally, integrin ITGA4/ITGB7 (alpha-4/beta-7) (Peyer patches-specific homing receptor LPAM-1) is an adhesion molecule that mediates lymphocyte migration and homing to gut-associated lymphoid tissue (GALT). Integrin ITGA4/ITGB7 interacts with the cell surface adhesion molecules MADCAM1 which is normally expressed by the vascular endothelium of the gastrointestinal tract. Also interacts with VCAM1 and fibronectin, an extracellular matrix component. It recognizes one or more domains within the alternatively spliced CS-1 region of fibronectin. Interactions involve the tripeptide L-D-T in MADCAM1, and L-D-V in fibronectin. Integrin ITGAE/ITGB7 (alpha-E/beta-7, HML-1) is a receptor for E-cadherin. The chain is Integrin beta-7 (Itgb7) from Mus musculus (Mouse).